The chain runs to 32 residues: Fimbrin sef21 (32 aa).

Its subcellular location is the fimbrium. This chain is Fimbrin sef21, found in Salmonella enteritidis.